The primary structure comprises 205 residues: Holliday junction branch migration complex subunit RuvA (205 aa).

The interval 1–64 is domain I; that stretch reads MIGRLRGTLA…EDAHLLYGFH (64 aa). The segment at 65–143 is domain II; sequence EKRERELFRE…AWETSPAMFT (79 aa). Positions 144–153 are flexible linker; that stretch reads LVSDGPVPVS. Positions 154–205 are domain III; it reads GASTAEADAVSALVSLGYKPQEASKAVSAIKDKAGLSSEELIRRSLKGMITK.

It belongs to the RuvA family. In terms of assembly, homotetramer. Forms an RuvA(8)-RuvB(12)-Holliday junction (HJ) complex. HJ DNA is sandwiched between 2 RuvA tetramers; dsDNA enters through RuvA and exits via RuvB. An RuvB hexamer assembles on each DNA strand where it exits the tetramer. Each RuvB hexamer is contacted by two RuvA subunits (via domain III) on 2 adjacent RuvB subunits; this complex drives branch migration. In the full resolvosome a probable DNA-RuvA(4)-RuvB(12)-RuvC(2) complex forms which resolves the HJ.

It is found in the cytoplasm. In terms of biological role, the RuvA-RuvB-RuvC complex processes Holliday junction (HJ) DNA during genetic recombination and DNA repair, while the RuvA-RuvB complex plays an important role in the rescue of blocked DNA replication forks via replication fork reversal (RFR). RuvA specifically binds to HJ cruciform DNA, conferring on it an open structure. The RuvB hexamer acts as an ATP-dependent pump, pulling dsDNA into and through the RuvAB complex. HJ branch migration allows RuvC to scan DNA until it finds its consensus sequence, where it cleaves and resolves the cruciform DNA. This Pseudomonas putida (strain W619) protein is Holliday junction branch migration complex subunit RuvA.